The following is a 205-amino-acid chain: Large ribosomal subunit protein uL3 (205 aa).

The protein belongs to the universal ribosomal protein uL3 family. As to quaternary structure, part of the 50S ribosomal subunit. Forms a cluster with proteins L14 and L19.

In terms of biological role, one of the primary rRNA binding proteins, it binds directly near the 3'-end of the 23S rRNA, where it nucleates assembly of the 50S subunit. The protein is Large ribosomal subunit protein uL3 of Parabacteroides distasonis (strain ATCC 8503 / DSM 20701 / CIP 104284 / JCM 5825 / NCTC 11152).